The sequence spans 287 residues: Lipoyl synthase (287 aa).

[4Fe-4S] cluster contacts are provided by cysteine 34, cysteine 39, cysteine 45, cysteine 60, cysteine 64, cysteine 67, and serine 273. Residues 46–262 (WNKRHATVMI…KYIAYSKGFL (217 aa)) form the Radical SAM core domain.

This sequence belongs to the radical SAM superfamily. Lipoyl synthase family. It depends on [4Fe-4S] cluster as a cofactor.

The protein resides in the cytoplasm. It carries out the reaction [[Fe-S] cluster scaffold protein carrying a second [4Fe-4S](2+) cluster] + N(6)-octanoyl-L-lysyl-[protein] + 2 oxidized [2Fe-2S]-[ferredoxin] + 2 S-adenosyl-L-methionine + 4 H(+) = [[Fe-S] cluster scaffold protein] + N(6)-[(R)-dihydrolipoyl]-L-lysyl-[protein] + 4 Fe(3+) + 2 hydrogen sulfide + 2 5'-deoxyadenosine + 2 L-methionine + 2 reduced [2Fe-2S]-[ferredoxin]. Its pathway is protein modification; protein lipoylation via endogenous pathway; protein N(6)-(lipoyl)lysine from octanoyl-[acyl-carrier-protein]: step 2/2. Its function is as follows. Catalyzes the radical-mediated insertion of two sulfur atoms into the C-6 and C-8 positions of the octanoyl moiety bound to the lipoyl domains of lipoate-dependent enzymes, thereby converting the octanoylated domains into lipoylated derivatives. This chain is Lipoyl synthase, found in Wolbachia sp. subsp. Drosophila simulans (strain wRi).